Reading from the N-terminus, the 270-residue chain is Regulatory protein RecX (270 aa).

It belongs to the RecX family.

It localises to the cytoplasm. Modulates RecA activity. In Bacillus cereus (strain AH187), this protein is Regulatory protein RecX.